A 117-amino-acid chain; its full sequence is NADH-ubiquinone oxidoreductase chain 3 (117 aa).

3 helical membrane-spanning segments follow: residues Ile4–Ile24, Ile60–Ile80, and Ile86–His106.

The protein belongs to the complex I subunit 3 family.

The protein localises to the mitochondrion membrane. It catalyses the reaction a ubiquinone + NADH + 5 H(+)(in) = a ubiquinol + NAD(+) + 4 H(+)(out). In terms of biological role, core subunit of the mitochondrial membrane respiratory chain NADH dehydrogenase (Complex I) that is believed to belong to the minimal assembly required for catalysis. Complex I functions in the transfer of electrons from NADH to the respiratory chain. The immediate electron acceptor for the enzyme is believed to be ubiquinone. The polypeptide is NADH-ubiquinone oxidoreductase chain 3 (mt:ND3) (Drosophila subobscura (Fruit fly)).